Consider the following 138-residue polypeptide: Abscisic stress-ripening protein 5 (138 aa).

Basic residues predominate over residues Met-1–His-13. 2 disordered regions span residues Met-1–Gly-27 and Gly-106–Gly-138.

The protein belongs to the abscisic acid and water stress-induced protein family.

Its subcellular location is the nucleus. It is found in the cytoplasm. Involved in tolerance to aluminum. Regulates the expression of different genes that collectively contribute to the protection of the cell in response to aluminum stress. In Oryza sativa subsp. indica (Rice), this protein is Abscisic stress-ripening protein 5.